We begin with the raw amino-acid sequence, 178 residues long: uncharacterized protein (178 aa).

The protein to E.coli YrdD.

This is an uncharacterized protein from Haemophilus influenzae (strain ATCC 51907 / DSM 11121 / KW20 / Rd).